The sequence spans 288 residues: MAATFFGEVVRTPCRAGTEEEEEEEDGNRETPEDREVRRQLARKREVRLFRRQTKTTLEVSLLEKHPCSKFIIAIGNNAVAFLSSFVMNSGAWEEVGCAKLWNEWCRTTDTAHLSPTEAFCVFYHLKSNPSVMLCQCSCYVAEDQQYQWLEKVFGSCPRKNMQVTILTCRHVTDYKTSESTSSLHTPFLKALKTQNFKEPPFCSLLEQPNIVHDLPAAVLSYCQVWRIPAVLYLCYTDVMKLDLITIEAFKPVLSSKSLKCLVKNIPQSTEILKKLMTTNEIQSNIYT.

The residue at position 2 (Ala2) is an N-acetylalanine. A disordered region spans residues 12–38 (TPCRAGTEEEEEEEDGNRETPEDREVR). The residue at position 18 (Thr18) is a Phosphothreonine. Positions 28-38 (NRETPEDREVR) are enriched in basic and acidic residues. Thr54 carries the phosphothreonine modification. Ser180 is modified (phosphoserine). The residue at position 264 (Lys264) is an N6-acetyllysine.

This sequence belongs to the PSMG1 family. As to quaternary structure, forms a heterodimer with PSMG2. The PSMG1-PSMG2 heterodimer interacts directly with the PSMA5 and PSMA7 proteasome alpha subunits. Post-translationally, degraded by the proteasome upon completion of 20S proteasome maturation.

It localises to the cytoplasm. The protein resides in the endoplasmic reticulum. Its function is as follows. Chaperone protein which promotes assembly of the 20S proteasome as part of a heterodimer with PSMG2. The PSMG1-PSMG2 heterodimer binds to the PSMA5 and PSMA7 proteasome subunits, promotes assembly of the proteasome alpha subunits into the heteroheptameric alpha ring and prevents alpha ring dimerization. The protein is Proteasome assembly chaperone 1 of Bos taurus (Bovine).